The sequence spans 330 residues: MIAFRGVSKVYTAGGREVAALRNVSLRVEAGEIHGVLGQSGAGKSTLIRCANLLERPTEGSVSVDGQDLLALSPEALRKARQGIGMIFQHFNLFGSKTVAANVAYPLEVAGTPREAIRERVEELLSLVGLSDKAQAYPSQLSGGQKQRVGIARALAPRPRVLLSDEATSALDPETTRSVLGLLRDINQKLGVTLLLITHQMDVVKAICDSVSVLERGRLVEQGKVTELLAHPSTRLHQLCFPAFAAPTDAPSGRRVALTLAGEHARRPLLGTLARQFDVDALLVEGAMERVGNTRVGRLLVDLQGSADAVSQALAYLREQGLTLEEAANG.

Residues 2–241 (IAFRGVSKVY…PSTRLHQLCF (240 aa)) enclose the ABC transporter domain. Position 38 to 45 (38 to 45 (GQSGAGKS)) interacts with ATP.

It belongs to the ABC transporter superfamily. Methionine importer (TC 3.A.1.24) family. As to quaternary structure, the complex is composed of two ATP-binding proteins (MetN), two transmembrane proteins (MetI) and a solute-binding protein (MetQ).

It localises to the cell inner membrane. It catalyses the reaction L-methionine(out) + ATP + H2O = L-methionine(in) + ADP + phosphate + H(+). The enzyme catalyses D-methionine(out) + ATP + H2O = D-methionine(in) + ADP + phosphate + H(+). Part of the ABC transporter complex MetNIQ involved in methionine import. Responsible for energy coupling to the transport system. The chain is Methionine import ATP-binding protein MetN from Myxococcus xanthus (strain DK1622).